We begin with the raw amino-acid sequence, 418 residues long: Thyroxine-binding globulin (418 aa).

Residues 1–20 form the signal peptide; that stretch reads MSMFFYLFLLVLGLQATIHC. 6 N-linked (GlcNAc...) asparagine glycosylation sites follow: Asn24, Asn39, Asn102, Asn168, Asn227, and Asn256. Asn296 and Lys401 together coordinate thyroxine.

Belongs to the serpin family. Expressed by the liver and secreted in plasma.

The protein localises to the secreted. Its function is as follows. Major thyroid hormone transport protein in serum. The sequence is that of Thyroxine-binding globulin (Serpina7) from Rattus norvegicus (Rat).